The following is a 393-amino-acid chain: Messenger RNA-binding inhibitor of apoptosis 1 (393 aa).

Residues 12 to 76 (ELYIPQKMKA…EKILRDVWRK (65 aa)) are KH 1-like. The interval 79–157 (VQIMIREAAL…MMIECLTEHF (79 aa)) is KH 2-like. The segment at 259–322 (EKIKQWIPTT…NKEQCQEARN (64 aa)) is KH 3-like. The segment at 328-393 (MQSHQDKPAS…LTPRKLSPSD (66 aa)) is disordered. The segment covering 345-359 (STPGSPFTSDSSSTT) has biased composition (low complexity).

In terms of assembly, may interact with wago-4. As to expression, expressed throughout the germline and in oocytes (at protein level).

The protein resides in the cytoplasm. Its subcellular location is the perinuclear region. RNA-binding protein which binds to its own mRNA and target mRNAs to negatively regulate gene expression to modulate apoptosis and differentiation in the germline. Negatively regulates the expression of the argonaute protein wago-4, and may thus play a role in RNA-mediated gene silencing (RNAi) in the germline. This is Messenger RNA-binding inhibitor of apoptosis 1 from Caenorhabditis elegans.